The sequence spans 96 residues: Small ribosomal subunit protein bS6 (96 aa).

This sequence belongs to the bacterial ribosomal protein bS6 family.

Binds together with bS18 to 16S ribosomal RNA. The polypeptide is Small ribosomal subunit protein bS6 (Mycobacteroides abscessus (strain ATCC 19977 / DSM 44196 / CCUG 20993 / CIP 104536 / JCM 13569 / NCTC 13031 / TMC 1543 / L948) (Mycobacterium abscessus)).